Consider the following 82-residue polypeptide: UPF0180 protein BT9727_1277 (82 aa).

It belongs to the UPF0180 family.

This chain is UPF0180 protein BT9727_1277, found in Bacillus thuringiensis subsp. konkukian (strain 97-27).